We begin with the raw amino-acid sequence, 162 residues long: Nucleotide-binding protein Franean1_6074 (162 aa).

It belongs to the YajQ family.

Nucleotide-binding protein. In Parafrankia sp. (strain EAN1pec), this protein is Nucleotide-binding protein Franean1_6074.